A 317-amino-acid chain; its full sequence is uncharacterized protein (317 aa).

Residues 1-16 form the signal peptide; sequence MKLSFILSTLVAGALA. N-linked (GlcNAc...) asparagine glycosylation occurs at Asn42. 2 stretches are compositionally biased toward low complexity: residues 150-238 and 247-259; these read SSST…SSSS and TASTDDSSSASSA. Residues 150-259 form a disordered region; the sequence is SSSTPSSSSS…TDDSSSASSA (110 aa).

This is an uncharacterized protein from Schizosaccharomyces pombe (strain 972 / ATCC 24843) (Fission yeast).